The sequence spans 381 residues: RxLR effector protein 54 (381 aa).

The first 19 residues, 1–19 (MRFQSIMMLTITCAGTCLA), serve as a signal peptide directing secretion. The RxLR-dEER signature appears at 57-75 (RFLRFDTVARDTAGNDEER). 5 WY-domain regions span residues 97-150 (SAEE…ANNG), 151-198 (NQAF…SLSG), 199-247 (NWIR…WNKN), 251-299 (FFGD…LLTS), and 302-354 (SHKT…RDKI). Positions 372–381 (KPLDFDWEIV) match the ATG8 interacting motif motif.

The protein belongs to the RxLR effector family. Interacts via its C-terminal AIM with host ATG8CL.

It localises to the secreted. The protein localises to the host nucleus. It is found in the host cytoplasm. In terms of biological role, effector that specifically binds host autophagy protein ATG8CL of the ATG8 family to stimulate autophagosome formation and subsequent autophagy rather than blocking autophagic flux. The pathogen remodels host-microbe interface by co-opting the host autophagy machinery which plays a key role in plant immunity. PexRD54 competes with the autophagy cargo receptor Joka2 to deplete it out of ATG8CL complexes and interferes with Joka2's positive effect on pathogen defense. In Phytophthora infestans (strain T30-4) (Potato late blight agent), this protein is RxLR effector protein 54.